The sequence spans 705 residues: Tryptophan synthase (705 aa).

The segment at 1 to 293 (MEAIKKVFEQ…QLTPNAETAK (293 aa)) is tryptophan synthase alpha chain. Active-site proton acceptor residues include Glu49 and Asp60. Positions 266 to 287 (KGEPSRVRSPGAAQRTPSQLTP) are disordered. The interval 294 to 705 (GVENILPARF…HVSSNAIPSK (412 aa)) is tryptophan synthase beta chain. An N6-(pyridoxal phosphate)lysine modification is found at Lys381.

It in the N-terminal section; belongs to the TrpA family. This sequence in the C-terminal section; belongs to the TrpB family. Requires pyridoxal 5'-phosphate as cofactor.

It catalyses the reaction (1S,2R)-1-C-(indol-3-yl)glycerol 3-phosphate + L-serine = D-glyceraldehyde 3-phosphate + L-tryptophan + H2O. It functions in the pathway amino-acid biosynthesis; L-tryptophan biosynthesis; L-tryptophan from chorismate: step 5/5. The chain is Tryptophan synthase (TRP-1) from Coprinopsis cinerea (Inky cap fungus).